The primary structure comprises 1499 residues: Autophagy-related protein 2 (1499 aa).

Residues 211–221 show a composition bias toward polar residues; sequence EQSVPSYGSSS. The interval 211–237 is disordered; sequence EQSVPSYGSSSSDKEDDNTSDSEDPLS. Residues 224–234 are compositionally biased toward acidic residues; the sequence is KEDDNTSDSED.

It belongs to the ATG2 family.

It is found in the preautophagosomal structure membrane. It localises to the endoplasmic reticulum membrane. The enzyme catalyses a 1,2-diacyl-sn-glycero-3-phosphocholine(in) = a 1,2-diacyl-sn-glycero-3-phosphocholine(out). The catalysed reaction is a 1,2-diacyl-sn-glycero-3-phospho-L-serine(in) = a 1,2-diacyl-sn-glycero-3-phospho-L-serine(out). It catalyses the reaction a 1,2-diacyl-sn-glycero-3-phosphoethanolamine(in) = a 1,2-diacyl-sn-glycero-3-phosphoethanolamine(out). Functionally, lipid transfer protein required for autophagosome completion and peroxisome degradation. Tethers the edge of the isolation membrane (IM) to the endoplasmic reticulum (ER) and mediates direct lipid transfer from ER to IM for IM expansion. ATG2 binds to the ER exit site (ERES), which is the membrane source for autophagosome formation, using basic residues in its N-terminal region (NR) and to the expanding edge of the IM through its C-terminal region. The latter binding is assisted by an ATG18-PtdIns3P interaction. ATG2 then extracts phospholipids from the membrane source using its NR and transfers them to ATG9 to the IM through its predicted beta-sheet-rich structure for membrane expansion. The chain is Autophagy-related protein 2 from Kluyveromyces marxianus (strain DMKU3-1042 / BCC 29191 / NBRC 104275) (Yeast).